The sequence spans 206 residues: Guanylate kinase (206 aa).

The Guanylate kinase-like domain occupies glycine 7–leucine 185. Alanine 14–threonine 21 is a binding site for ATP.

The protein belongs to the guanylate kinase family.

It localises to the cytoplasm. It catalyses the reaction GMP + ATP = GDP + ADP. Essential for recycling GMP and indirectly, cGMP. The chain is Guanylate kinase from Oleidesulfovibrio alaskensis (strain ATCC BAA-1058 / DSM 17464 / G20) (Desulfovibrio alaskensis).